The primary structure comprises 31 residues: Photosystem II reaction center protein T (31 aa).

Residues Ala-3 to Phe-23 form a helical membrane-spanning segment.

It belongs to the PsbT family. In terms of assembly, PSII is composed of 1 copy each of membrane proteins PsbA, PsbB, PsbC, PsbD, PsbE, PsbF, PsbH, PsbI, PsbJ, PsbK, PsbL, PsbM, PsbT, PsbY, PsbZ, Psb30/Ycf12, at least 3 peripheral proteins of the oxygen-evolving complex and a large number of cofactors. It forms dimeric complexes.

It localises to the plastid. The protein localises to the chloroplast thylakoid membrane. Functionally, found at the monomer-monomer interface of the photosystem II (PS II) dimer, plays a role in assembly and dimerization of PSII. PSII is a light-driven water plastoquinone oxidoreductase, using light energy to abstract electrons from H(2)O, generating a proton gradient subsequently used for ATP formation. The protein is Photosystem II reaction center protein T of Stigeoclonium helveticum (Green alga).